The chain runs to 408 residues: uncharacterized protein (408 aa).

A helical membrane pass occupies residues Tyr56 to Leu76.

It belongs to the mycobacterial PPE family.

Its subcellular location is the cell membrane. This is an uncharacterized protein from Mycobacterium bovis (strain ATCC BAA-935 / AF2122/97).